Reading from the N-terminus, the 438-residue chain is Tol-Pal system protein TolB (438 aa).

Residues 1 to 35 (MITMKNILKLRATGLLLLLLLMISVLGNGIGQAMA) form the signal peptide.

The protein belongs to the TolB family. The Tol-Pal system is composed of five core proteins: the inner membrane proteins TolA, TolQ and TolR, the periplasmic protein TolB and the outer membrane protein Pal. They form a network linking the inner and outer membranes and the peptidoglycan layer.

It is found in the periplasm. In terms of biological role, part of the Tol-Pal system, which plays a role in outer membrane invagination during cell division and is important for maintaining outer membrane integrity. This chain is Tol-Pal system protein TolB, found in Desulfotalea psychrophila (strain LSv54 / DSM 12343).